A 345-amino-acid polypeptide reads, in one-letter code: Holliday junction branch migration complex subunit RuvB (345 aa).

The large ATPase domain (RuvB-L) stretch occupies residues 4-185 (LDNRFVTPLS…FGVLCPMEFY (182 aa)). ATP contacts are provided by residues Leu24, Arg25, Gly66, Lys69, Thr70, Thr71, 132–134 (EDY), Arg175, Tyr185, and Arg222. A Mg(2+)-binding site is contributed by Thr70. The segment at 186 to 256 (NEEELKDIIV…MTNKALNLLE (71 aa)) is small ATPAse domain (RuvB-S). The segment at 259–345 (KEGFDSIDTK…ENINQYKFKI (87 aa)) is head domain (RuvB-H). 2 residues coordinate DNA: Arg314 and Arg319.

Belongs to the RuvB family. Homohexamer. Forms an RuvA(8)-RuvB(12)-Holliday junction (HJ) complex. HJ DNA is sandwiched between 2 RuvA tetramers; dsDNA enters through RuvA and exits via RuvB. An RuvB hexamer assembles on each DNA strand where it exits the tetramer. Each RuvB hexamer is contacted by two RuvA subunits (via domain III) on 2 adjacent RuvB subunits; this complex drives branch migration. In the full resolvosome a probable DNA-RuvA(4)-RuvB(12)-RuvC(2) complex forms which resolves the HJ.

The protein resides in the cytoplasm. It catalyses the reaction ATP + H2O = ADP + phosphate + H(+). Its function is as follows. The RuvA-RuvB-RuvC complex processes Holliday junction (HJ) DNA during genetic recombination and DNA repair, while the RuvA-RuvB complex plays an important role in the rescue of blocked DNA replication forks via replication fork reversal (RFR). RuvA specifically binds to HJ cruciform DNA, conferring on it an open structure. The RuvB hexamer acts as an ATP-dependent pump, pulling dsDNA into and through the RuvAB complex. RuvB forms 2 homohexamers on either side of HJ DNA bound by 1 or 2 RuvA tetramers; 4 subunits per hexamer contact DNA at a time. Coordinated motions by a converter formed by DNA-disengaged RuvB subunits stimulates ATP hydrolysis and nucleotide exchange. Immobilization of the converter enables RuvB to convert the ATP-contained energy into a lever motion, pulling 2 nucleotides of DNA out of the RuvA tetramer per ATP hydrolyzed, thus driving DNA branch migration. The RuvB motors rotate together with the DNA substrate, which together with the progressing nucleotide cycle form the mechanistic basis for DNA recombination by continuous HJ branch migration. Branch migration allows RuvC to scan DNA until it finds its consensus sequence, where it cleaves and resolves cruciform DNA. The protein is Holliday junction branch migration complex subunit RuvB of Clostridium tetani (strain Massachusetts / E88).